Reading from the N-terminus, the 309-residue chain is Foldase protein PrsA 2 (309 aa).

An N-terminal signal peptide occupies residues 1–22 (MKQMNKLITGVVTLATVVTLSA). The N-palmitoyl cysteine moiety is linked to residue C23. C23 is lipidated: S-diacylglycerol cysteine. The PpiC domain maps to 146-241 (TPTMTAEIMQ…RTYHIIKVTK (96 aa)).

The protein belongs to the PrsA family.

The protein localises to the cell membrane. It catalyses the reaction [protein]-peptidylproline (omega=180) = [protein]-peptidylproline (omega=0). Functionally, plays a major role in protein secretion by helping the post-translocational extracellular folding of several secreted proteins. This Streptococcus pyogenes serotype M1 protein is Foldase protein PrsA 2 (prsA2).